The following is a 240-amino-acid chain: 7-cyano-7-deazaguanine synthase (240 aa).

14 to 24 (FSGGQDSATCL) is a binding site for ATP. Positions 202, 217, 220, and 223 each coordinate Zn(2+).

It belongs to the QueC family. It depends on Zn(2+) as a cofactor.

It carries out the reaction 7-carboxy-7-deazaguanine + NH4(+) + ATP = 7-cyano-7-deazaguanine + ADP + phosphate + H2O + H(+). The protein operates within purine metabolism; 7-cyano-7-deazaguanine biosynthesis. In terms of biological role, catalyzes the ATP-dependent conversion of 7-carboxy-7-deazaguanine (CDG) to 7-cyano-7-deazaguanine (preQ(0)). The chain is 7-cyano-7-deazaguanine synthase from Rhodopseudomonas palustris (strain BisB18).